A 133-amino-acid polypeptide reads, in one-letter code: Small ribosomal subunit protein uS8 (133 aa).

Belongs to the universal ribosomal protein uS8 family. In terms of assembly, part of the 30S ribosomal subunit.

In terms of biological role, one of the primary rRNA binding proteins, it binds directly to 16S rRNA central domain where it helps coordinate assembly of the platform of the 30S subunit. The protein is Small ribosomal subunit protein uS8 of Aeropyrum pernix (strain ATCC 700893 / DSM 11879 / JCM 9820 / NBRC 100138 / K1).